Consider the following 491-residue polypeptide: Acetyl-coenzyme A carboxylase carboxyl transferase subunit beta, chloroplastic (491 aa).

The 268-residue stretch at 224 to 491 folds into the CoA carboxyltransferase N-terminal domain; the sequence is LWIQCENCYG…FFPLNPKKIK (268 aa). 4 residues coordinate Zn(2+): Cys228, Cys231, Cys247, and Cys250. Residues 228–250 form a C4-type zinc finger; sequence CENCYGLNYKKNLKSKINICEQC.

Belongs to the AccD/PCCB family. Acetyl-CoA carboxylase is a heterohexamer composed of biotin carboxyl carrier protein, biotin carboxylase and 2 subunits each of ACCase subunit alpha and ACCase plastid-coded subunit beta (accD). Zn(2+) serves as cofactor.

The protein localises to the plastid. It localises to the chloroplast stroma. It carries out the reaction N(6)-carboxybiotinyl-L-lysyl-[protein] + acetyl-CoA = N(6)-biotinyl-L-lysyl-[protein] + malonyl-CoA. It functions in the pathway lipid metabolism; malonyl-CoA biosynthesis; malonyl-CoA from acetyl-CoA: step 1/1. Component of the acetyl coenzyme A carboxylase (ACC) complex. Biotin carboxylase (BC) catalyzes the carboxylation of biotin on its carrier protein (BCCP) and then the CO(2) group is transferred by the transcarboxylase to acetyl-CoA to form malonyl-CoA. The polypeptide is Acetyl-coenzyme A carboxylase carboxyl transferase subunit beta, chloroplastic (Vitis vinifera (Grape)).